We begin with the raw amino-acid sequence, 393 residues long: NAD(P)H-quinone oxidoreductase subunit H, chloroplastic (393 aa).

Belongs to the complex I 49 kDa subunit family. In terms of assembly, NDH is composed of at least 16 different subunits, 5 of which are encoded in the nucleus.

The protein resides in the plastid. It is found in the chloroplast thylakoid membrane. The enzyme catalyses a plastoquinone + NADH + (n+1) H(+)(in) = a plastoquinol + NAD(+) + n H(+)(out). The catalysed reaction is a plastoquinone + NADPH + (n+1) H(+)(in) = a plastoquinol + NADP(+) + n H(+)(out). Its function is as follows. NDH shuttles electrons from NAD(P)H:plastoquinone, via FMN and iron-sulfur (Fe-S) centers, to quinones in the photosynthetic chain and possibly in a chloroplast respiratory chain. The immediate electron acceptor for the enzyme in this species is believed to be plastoquinone. Couples the redox reaction to proton translocation, and thus conserves the redox energy in a proton gradient. This is NAD(P)H-quinone oxidoreductase subunit H, chloroplastic from Solanum lycopersicum (Tomato).